We begin with the raw amino-acid sequence, 309 residues long: Olfactory receptor 10V1 (309 aa).

The Extracellular segment spans residues 1-25 (MEGINKTAKMQFFFRPFSPDPEVQM). Asparagine 5 is a glycosylation site (N-linked (GlcNAc...) asparagine). Residues 26 to 46 (LIFVVFLMMYLTSLGGNATIA) traverse the membrane as a helical segment. The Cytoplasmic portion of the chain corresponds to 47-54 (VIVQINHS). A helical transmembrane segment spans residues 55–75 (LHTPMYFFLANLAVLEIFYTS). The Extracellular segment spans residues 76 to 100 (SITPLALANLLSMGKTPVSITGCGT). The cysteines at positions 98 and 190 are disulfide-linked. The chain crosses the membrane as a helical span at residues 101 to 121 (QMFFFVFLGGADCVLLVVMAY). Topologically, residues 122-140 (DQFIAICHPLRYRLIMSWS) are cytoplasmic. The chain crosses the membrane as a helical span at residues 141–161 (LCVELLVGSLVLGFLLSLPLT). At 162-198 (ILIFHLPFCHNDEIYHFYCDMPAVMRLACADTRVHKT) the chain is on the extracellular side. The helical transmembrane segment at 199–218 (ALYIISFIVLSIPLSLISIS) threads the bilayer. Residues 219-238 (YVFIVVAILRIRSAEGRQQA) are Cytoplasmic-facing. The helical transmembrane segment at 239–259 (YSTCSSHILVVLLQYGCTSFI) threads the bilayer. Topologically, residues 260–272 (YLSPSSSYSPEMG) are extracellular. A helical membrane pass occupies residues 273-293 (RVVSVAYTFITPILNPLIYSL). The Cytoplasmic portion of the chain corresponds to 294–309 (RNKELKDALRKALRKF).

The protein belongs to the G-protein coupled receptor 1 family.

The protein resides in the cell membrane. In terms of biological role, odorant receptor. The chain is Olfactory receptor 10V1 (OR10V1) from Homo sapiens (Human).